The sequence spans 380 residues: Endo-chitosanase C (380 aa).

The N-terminal stretch at 1–22 (MPIKSFASRLALSLAICGTAMG) is a signal peptide. The stretch at 276–304 (CSWPGHCAGATCSSNDDCSDDLTCQNGKC) is one R3-1 repeat. The R3-2 repeat unit spans residues 311 to 341 (ETCSWEGHCKGATCSSNDDCSDELACISGIC). An R3-3 repeat occupies 348 to 378 (ETCEWEGHCEGASCSSHDDCDGNLACKNGKC).

Belongs to the glycosyl hydrolase 75 family.

It localises to the secreted. It catalyses the reaction Endohydrolysis of beta-(1-&gt;4)-linkages between D-glucosamine residues in a partly acetylated chitosan.. In terms of biological role, chitosanase catalyzing the endo-type cleavage of chitosan, the deacylated form of chitin. Chitosanase may be crucial in the degradation of the deacetylated portion of chitin in the fungal cell wall. Chitoolisaccharides produced by the hydrolysis of partially N-acetylated chitosan are known to have many biological activities, including antibacterial activity, immune-enhancing effects, and elicitor activity. The sequence is that of Endo-chitosanase C (csnC) from Aspergillus oryzae (Yellow koji mold).